The chain runs to 161 residues: Transcription antitermination protein NusB (161 aa).

Belongs to the NusB family.

Its function is as follows. Involved in transcription antitermination. Required for transcription of ribosomal RNA (rRNA) genes. Binds specifically to the boxA antiterminator sequence of the ribosomal RNA (rrn) operons. The sequence is that of Transcription antitermination protein NusB from Nitrobacter winogradskyi (strain ATCC 25391 / DSM 10237 / CIP 104748 / NCIMB 11846 / Nb-255).